The chain runs to 219 residues: C-8 sterol isomerase erg2 (219 aa).

A helical transmembrane segment spans residues 1-21 (MKLTKFLTVFIPFIAGLIYYI).

The protein belongs to the ERG2 family.

The protein localises to the endoplasmic reticulum membrane. It carries out the reaction fecosterol = episterol. Its pathway is steroid metabolism; ergosterol biosynthesis. Functionally, C-8 sterol isomerase; part of the third module of ergosterol biosynthesis pathway that includes by the late steps of the pathway. Erg2 catalyzes the reaction which results in unsaturation at C-7 in the B ring of sterols and thus converts fecosterol to episterol. The third module or late pathway involves the ergosterol synthesis itself through consecutive reactions that mainly occur in the endoplasmic reticulum (ER) membrane. Firstly, the squalene synthase erg9 catalyzes the condensation of 2 farnesyl pyrophosphate moieties to form squalene, which is the precursor of all steroids. Secondly, squalene is converted into lanosterol by the consecutive action of the squalene epoxidase erg1 and the lanosterol synthase erg7. The lanosterol 14-alpha-demethylase erg11/cyp1 catalyzes C14-demethylation of lanosterol to produce 4,4'-dimethyl cholesta-8,14,24-triene-3-beta-ol. In the next steps, a complex process involving various demethylation, reduction and desaturation reactions catalyzed by the C-14 reductase erg24 and the C-4 demethylation complex erg25-erg26-erg27 leads to the production of zymosterol. Erg28 likely functions in the C-4 demethylation complex reaction by tethering erg26 and Erg27 to the endoplasmic reticulum or to facilitate interaction between these proteins. Then, the sterol 24-C-methyltransferase erg6 catalyzes the methyl transfer from S-adenosyl-methionine to the C-24 of zymosterol to form fecosterol. The C-8 sterol isomerase erg2 catalyzes the reaction which results in unsaturation at C-7 in the B ring of sterols and thus converts fecosterol to episterol. The sterol-C5-desaturases erg31 and erg32 then catalyze the introduction of a C-5 double bond in the B ring to produce 5-dehydroepisterol. The C-22 sterol desaturase erg5 further converts 5-dehydroepisterol into ergosta-5,7,22,24(28)-tetraen-3beta-ol by forming the C-22(23) double bond in the sterol side chain. Finally, ergosta-5,7,22,24(28)-tetraen-3beta-ol is substrate of the C-24(28) sterol reductase erg4 to produce ergosterol. In the genus Schizosaccharomyces, a second route exists between lanosterol and fecosterol, via the methylation of lanosterol to eburicol by erg6, followed by C14-demethylation by erg11/cyp1 and C4-demethylation by the demethylation complex erg25-erg26-erg27. The chain is C-8 sterol isomerase erg2 from Schizosaccharomyces pombe (strain 972 / ATCC 24843) (Fission yeast).